A 438-amino-acid polypeptide reads, in one-letter code: Adenylosuccinate synthetase (438 aa).

GTP contacts are provided by residues 13 to 19 (GDEGKGK) and 41 to 43 (GHT). Asp-14 serves as the catalytic Proton acceptor. Residues Asp-14 and Gly-41 each contribute to the Mg(2+) site. IMP contacts are provided by residues 14-17 (DEGK), 39-42 (NAGH), Thr-130, Arg-144, Gln-225, Thr-240, and Arg-310. His-42 (proton donor) is an active-site residue. 306 to 312 (ATTGRLR) is a binding site for substrate. Residues Arg-312, 338–340 (KLD), and 421–423 (STG) each bind GTP.

The protein belongs to the adenylosuccinate synthetase family. In terms of assembly, homodimer. Requires Mg(2+) as cofactor.

Its subcellular location is the cytoplasm. It catalyses the reaction IMP + L-aspartate + GTP = N(6)-(1,2-dicarboxyethyl)-AMP + GDP + phosphate + 2 H(+). Its pathway is purine metabolism; AMP biosynthesis via de novo pathway; AMP from IMP: step 1/2. Functionally, plays an important role in the de novo pathway of purine nucleotide biosynthesis. Catalyzes the first committed step in the biosynthesis of AMP from IMP. The sequence is that of Adenylosuccinate synthetase from Aliivibrio fischeri (strain ATCC 700601 / ES114) (Vibrio fischeri).